An 81-amino-acid polypeptide reads, in one-letter code: Sec-independent protein translocase protein TatA (81 aa).

Residues Met1–Gly21 traverse the membrane as a helical segment. Residues Lys41–Gly81 form a disordered region.

The protein belongs to the TatA/E family. The Tat system comprises two distinct complexes: a TatABC complex, containing multiple copies of TatA, TatB and TatC subunits, and a separate TatA complex, containing only TatA subunits. Substrates initially bind to the TatABC complex, which probably triggers association of the separate TatA complex to form the active translocon.

It localises to the cell inner membrane. Functionally, part of the twin-arginine translocation (Tat) system that transports large folded proteins containing a characteristic twin-arginine motif in their signal peptide across membranes. TatA could form the protein-conducting channel of the Tat system. The polypeptide is Sec-independent protein translocase protein TatA (Beijerinckia indica subsp. indica (strain ATCC 9039 / DSM 1715 / NCIMB 8712)).